The chain runs to 336 residues: GTPase Obg (336 aa).

The Obg domain maps to 1 to 159 (MKFVDSATVF…LELAMELKLM (159 aa)). The disordered stretch occupies residues 120-143 (GGHGGRGNQHFATSTNQAPRRSEP). The segment covering 129–138 (HFATSTNQAP) has biased composition (polar residues). An OBG-type G domain is found at 160–323 (ADVGLVGFPN…LKDELWRQVS (164 aa)). GTP is bound by residues 166–173 (GFPNAGKS), 191–195 (FTTLV), 213–216 (DIPG), 280–283 (TKMD), and 304–306 (SSV). Mg(2+) contacts are provided by serine 173 and threonine 193.

Belongs to the TRAFAC class OBG-HflX-like GTPase superfamily. OBG GTPase family. As to quaternary structure, monomer. Requires Mg(2+) as cofactor.

It localises to the cytoplasm. In terms of biological role, an essential GTPase which binds GTP, GDP and possibly (p)ppGpp with moderate affinity, with high nucleotide exchange rates and a fairly low GTP hydrolysis rate. Plays a role in control of the cell cycle, stress response, ribosome biogenesis and in those bacteria that undergo differentiation, in morphogenesis control. This chain is GTPase Obg, found in Chlorobium phaeovibrioides (strain DSM 265 / 1930) (Prosthecochloris vibrioformis (strain DSM 265)).